The following is a 206-amino-acid chain: LexA repressor (206 aa).

The segment at residues 28 to 48 (VREIGEAVGLASSSTVHGHLD) is a DNA-binding region (H-T-H motif). Residues Ser128 and Lys166 each act as for autocatalytic cleavage activity in the active site.

Belongs to the peptidase S24 family. In terms of assembly, homodimer.

The catalysed reaction is Hydrolysis of Ala-|-Gly bond in repressor LexA.. In terms of biological role, represses a number of genes involved in the response to DNA damage (SOS response), including recA and lexA. In the presence of single-stranded DNA, RecA interacts with LexA causing an autocatalytic cleavage which disrupts the DNA-binding part of LexA, leading to derepression of the SOS regulon and eventually DNA repair. The polypeptide is LexA repressor (Exiguobacterium sp. (strain ATCC BAA-1283 / AT1b)).